A 2543-amino-acid polypeptide reads, in one-letter code: Polyketide synthase PksR (2543 aa).

A methyltransferase region spans residues 165 to 269 (LEIGAGTGGT…KAVLKKNGLL (105 aa)). A Carrier 1 domain is found at 376-452 (SLIEQTAQFV…ELVEYLVKGH (77 aa)). Position 413 is an O-(pantetheine 4'-phosphoryl)serine (Ser413). The disordered stretch occupies residues 465 to 485 (TKPAKNEAPLQTERTDPNKPF). Positions 527 to 959 (TEDIAIIGVS…GAYANLIIEE (433 aa)) constitute a Ketosynthase family 3 (KS3) 1 domain. Catalysis depends on Cys700, which acts as the For beta-ketoacyl synthase 1 activity. Residues 1114–1242 (HFDVSSINEK…GQCGIGSFEP (129 aa)) are N-terminal hotdog fold. The PKS/mFAS DH domain occupies 1114 to 1397 (HFDVSSINEK…LKQLRISNQR (284 aa)). The segment at 1255-1397 (TKLHHIDQMY…LKQLRISNQR (143 aa)) is C-terminal hotdog fold. Residues 1407 to 1485 (SNLKARIRSY…ELIDFFADKH (79 aa)) form the Carrier 2 domain. At Ser1445 the chain carries O-(pantetheine 4'-phosphoryl)serine. In terms of domain architecture, Ketosynthase family 3 (KS3) 2 spans 1528 to 1946 (ADGIAIIGMS…GVNAHVILEE (419 aa)). Active-site for beta-ketoacyl synthase 2 activity residues include Cys1680, His1815, and His1862. Positions 2134–2208 (RINNSSDHHI…DMMDLIAKKQ (75 aa)) constitute a Carrier 3 domain. Ser2168 is subject to O-(pantetheine 4'-phosphoryl)serine. The thioesterase stretch occupies residues 2234–2514 (RPVFWFHGGV…EFCEKLYSNR (281 aa)).

It depends on pantetheine 4'-phosphate as a cofactor.

It is found in the cytoplasm. It participates in antibiotic biosynthesis; bacillaene biosynthesis. Its function is as follows. Involved in some intermediate steps for the synthesis of the antibiotic polyketide bacillaene which is involved in secondary metabolism. The chain is Polyketide synthase PksR (pksR) from Bacillus subtilis (strain 168).